Reading from the N-terminus, the 47-residue chain is Large ribosomal subunit protein eL40 (47 aa).

This sequence belongs to the eukaryotic ribosomal protein eL40 family.

This Halobacterium salinarum (strain ATCC 29341 / DSM 671 / R1) protein is Large ribosomal subunit protein eL40.